A 456-amino-acid polypeptide reads, in one-letter code: UPF0496 protein 4 (456 aa).

Residues 205 to 221 (SVTVFVCSIFVAVLSGS) form a helical membrane-spanning segment.

The protein belongs to the ROH1 family.

The protein resides in the membrane. The chain is UPF0496 protein 4 from Oryza sativa subsp. indica (Rice).